The following is a 78-amino-acid chain: Sec-independent protein translocase protein TatA (78 aa).

The chain crosses the membrane as a helical span at residues 1-21 (MGGISIWQLLIVALIVVLLFG). A disordered region spans residues 40–78 (KSAMSSEEEKKAIEDSASEKTAQTEEKKTESKDKDKEQV). A compositionally biased stretch (basic and acidic residues) spans 46–78 (EEEKKAIEDSASEKTAQTEEKKTESKDKDKEQV).

The protein belongs to the TatA/E family. As to quaternary structure, the Tat system comprises two distinct complexes: a TatABC complex, containing multiple copies of TatA, TatB and TatC subunits, and a separate TatA complex, containing only TatA subunits. Substrates initially bind to the TatABC complex, which probably triggers association of the separate TatA complex to form the active translocon.

The protein resides in the cell inner membrane. Functionally, part of the twin-arginine translocation (Tat) system that transports large folded proteins containing a characteristic twin-arginine motif in their signal peptide across membranes. TatA could form the protein-conducting channel of the Tat system. This chain is Sec-independent protein translocase protein TatA, found in Shewanella sediminis (strain HAW-EB3).